Here is a 643-residue protein sequence, read N- to C-terminus: Transmembrane protein 62 (643 aa).

The chain crosses the membrane as a helical span at residues 9–29; the sequence is VVAGLAAAAVAALLLEHYGLA. Asparagine 180 is a glycosylation site (N-linked (GlcNAc...) asparagine). 4 helical membrane passes run 431-451, 484-504, 532-552, and 572-592; these read IVAR…LITF, YSVL…GEII, GIIQ…WSLL, and IIPV…SCYF.

The protein resides in the membrane. This chain is Transmembrane protein 62 (Tmem62), found in Mus musculus (Mouse).